A 328-amino-acid polypeptide reads, in one-letter code: Gonadotropin-releasing hormone receptor (328 aa).

The Extracellular portion of the chain corresponds to 1–38; that stretch reads MANSASPEQNQNHCSASNSSIPLTQANLPTLTLSGKIR. N-linked (GlcNAc...) asparagine glycosylation occurs at Asn18. Residues 39–59 traverse the membrane as a helical segment; sequence VTVTFFLFLLSTTFNASFLLK. Topologically, residues 60 to 84 are cytoplasmic; the sequence is LHKWTQKKENGKKLSKMKVLLKHLT. The helical transmembrane segment at 85–105 threads the bilayer; that stretch reads LANLLETLIVMPLDGMWNITV. The Extracellular segment spans residues 106 to 115; the sequence is QWYAGELLCK. Cys114 and Cys196 are joined by a disulfide. A helical membrane pass occupies residues 116–136; that stretch reads VLSYLKLFSMYAPAFMMVVIS. Topologically, residues 137–157 are cytoplasmic; that stretch reads LDRSLAITRPLAVKSNSKLGR. Residues 158–178 traverse the membrane as a helical segment; that stretch reads SMIGLAWLLSSIFAGPQLYIF. Residues 179 to 208 are Extracellular-facing; it reads RMIHLADSSGQTEGFSQCVTHCSFPQWWHQ. Residues 209–229 form a helical membrane-spanning segment; it reads AFYNFFTFSCLFIIPLLFMLI. Over 230–271 the chain is Cytoplasmic; that stretch reads CNAKIIFTLTRVLHQDPHKLQLNQSKNNIPRARLRTLKMTVA. Residues 272-292 form a helical membrane-spanning segment; sequence FATSFTVCWTPYYVLGIWYWF. Residues 293 to 306 lie on the Extracellular side of the membrane; it reads DPEMLNRVSDPVNH. The chain crosses the membrane as a helical span at residues 307-327; sequence FFFLFALLNPCFDPLIYGYFS. Position 328 (Leu328) is a topological domain, cytoplasmic.

It belongs to the G-protein coupled receptor 1 family.

The protein localises to the cell membrane. Receptor for gonadotropin releasing hormone (GnRH) that mediates the action of GnRH to stimulate the secretion of the gonadotropic hormones luteinizing hormone (LH) and follicle-stimulating hormone (FSH). This receptor mediates its action by association with G-proteins that activate a phosphatidylinositol-calcium second messenger system. This chain is Gonadotropin-releasing hormone receptor (GNRHR), found in Equus caballus (Horse).